A 35-amino-acid polypeptide reads, in one-letter code: Mu-thomitoxin-Hme1c (35 aa).

3 cysteine pairs are disulfide-bonded: Cys-2/Cys-18, Cys-9/Cys-23, and Cys-17/Cys-34.

This sequence belongs to the neurotoxin 07 (Beta/delta-agtx) family. Expressed by the venom gland.

It localises to the secreted. In terms of biological role, gating-modifier toxin that inhibits mammalian and insect voltage-gated sodium channels. It shifts the voltage dependence of channel activation to more positive voltages. It shows potent activity on Nav1.4/SCN4A (IC(50)=103 nM), Nav1.5/SCN5A (IC(50)=268 nM) and Para/DmNav1 (IC(50)=555 nM) and lower activities on Nav1.2/SCN2A (IC(50)=1447 nM) and Nav1.6/SCN8A (IC(50)=3504 nM). In addition, at a concentration of 1 uM, the toxin inhibits 90-100% of sodium current through Nav1.2/SCN2A, Nav1.4/SCN4A, Nav1.5/SCN5A, Nav1.6/SCN8A and Para/DmNav1 channels, when the voltage of maximal activation of the channel in control conditions is applied. It binds to the S3-S4 helix-loop-helix motif in the voltage-sensing domain of repeat 1 (shown on hNav1.4/SCN4A). The toxin is amphiphilic and binds to both neutral and negatively charged lipid vesicles with high affinity. The hydrophobic face lies on the opposite side to the hydrophobic faces of classical gating modifiers. The protein is Mu-thomitoxin-Hme1c of Heriaeus mellotteei (Crab spider).